The sequence spans 103 residues: Large ribosomal subunit protein bL21 (103 aa).

This sequence belongs to the bacterial ribosomal protein bL21 family. As to quaternary structure, part of the 50S ribosomal subunit. Contacts protein L20.

Its function is as follows. This protein binds to 23S rRNA in the presence of protein L20. The chain is Large ribosomal subunit protein bL21 from Acetivibrio thermocellus (strain ATCC 27405 / DSM 1237 / JCM 9322 / NBRC 103400 / NCIMB 10682 / NRRL B-4536 / VPI 7372) (Clostridium thermocellum).